Reading from the N-terminus, the 110-residue chain is Large ribosomal subunit protein P2 (110 aa).

Positions 63-110 (ASVPSGGGVAAAAPAAGGGGADPAEAKEEKKEEPEEESDDDMGFGLFD) are disordered. The segment covering 86 to 95 (AEAKEEKKEE) has biased composition (basic and acidic residues).

It belongs to the eukaryotic ribosomal protein P1/P2 family. As to quaternary structure, P1 and P2 exist as dimers at the large ribosomal subunit. In terms of processing, phosphorylated.

Functionally, plays an important role in the elongation step of protein synthesis. The protein is Large ribosomal subunit protein P2 of Cryptochiton stelleri (Giant gumboot chiton).